The chain runs to 714 residues: Phosphoribosylformylglycinamidine synthase subunit PurL (714 aa).

The active site involves H34. ATP is bound at residue Y37. E78 lines the Mg(2+) pocket. Residues 79 to 82 (SHNH) and R101 contribute to the substrate site. H80 serves as the catalytic Proton acceptor. Mg(2+) is bound at residue D102. Q226 serves as a coordination point for substrate. Position 254 (D254) interacts with Mg(2+). Position 298–300 (298–300 (ESQ)) interacts with substrate. Positions 474 and 511 each coordinate ATP. Residue N512 coordinates Mg(2+). S514 contributes to the substrate binding site.

Belongs to the FGAMS family. Monomer. Part of the FGAM synthase complex composed of 1 PurL, 1 PurQ and 2 PurS subunits.

The protein resides in the cytoplasm. The catalysed reaction is N(2)-formyl-N(1)-(5-phospho-beta-D-ribosyl)glycinamide + L-glutamine + ATP + H2O = 2-formamido-N(1)-(5-O-phospho-beta-D-ribosyl)acetamidine + L-glutamate + ADP + phosphate + H(+). It participates in purine metabolism; IMP biosynthesis via de novo pathway; 5-amino-1-(5-phospho-D-ribosyl)imidazole from N(2)-formyl-N(1)-(5-phospho-D-ribosyl)glycinamide: step 1/2. Its function is as follows. Part of the phosphoribosylformylglycinamidine synthase complex involved in the purines biosynthetic pathway. Catalyzes the ATP-dependent conversion of formylglycinamide ribonucleotide (FGAR) and glutamine to yield formylglycinamidine ribonucleotide (FGAM) and glutamate. The FGAM synthase complex is composed of three subunits. PurQ produces an ammonia molecule by converting glutamine to glutamate. PurL transfers the ammonia molecule to FGAR to form FGAM in an ATP-dependent manner. PurS interacts with PurQ and PurL and is thought to assist in the transfer of the ammonia molecule from PurQ to PurL. The polypeptide is Phosphoribosylformylglycinamidine synthase subunit PurL (Methanothermobacter marburgensis (strain ATCC BAA-927 / DSM 2133 / JCM 14651 / NBRC 100331 / OCM 82 / Marburg) (Methanobacterium thermoautotrophicum)).